A 225-amino-acid chain; its full sequence is C-reactive protein (225 aa).

A signal peptide spans 1–19 (MEKLLWCSLVMIGFSQAFA). Gln20 carries the pyrrolidone carboxylic acid modification. In terms of domain architecture, Pentraxin (PTX) spans 24-225 (SKTAFVFPKE…DVFIKPQLWP (202 aa)). Cys55 and Cys116 are disulfide-bonded. Asn80, Glu157, Gln158, Asp159, and Gln169 together coordinate Ca(2+).

This sequence belongs to the pentraxin family. As to quaternary structure, homopentamer. Pentraxin (or pentaxin) have a discoid arrangement of 5 non-covalently bound subunits. Interacts with FCN1; may regulate monocyte activation by FCN1. Ca(2+) is required as a cofactor. Found in plasma.

The protein localises to the secreted. In terms of biological role, displays several functions associated with host defense: it promotes agglutination, bacterial capsular swelling, phagocytosis and complement fixation through its calcium-dependent binding to phosphorylcholine. Can interact with DNA and histones and may scavenge nuclear material released from damaged circulating cells. This Mesocricetus auratus (Golden hamster) protein is C-reactive protein (CRP).